A 289-amino-acid polypeptide reads, in one-letter code: 5'-3' exonuclease (289 aa).

The region spanning V166–D256 is the 5'-3' exonuclease domain.

In terms of biological role, 5'-3' exonuclease acting preferentially on double-stranded DNA. The chain is 5'-3' exonuclease from Aquifex aeolicus (strain VF5).